The sequence spans 156 residues: MSEQNNTEMAFQIQRIYTKDISFEAPNAPQVFQQEWQPEVKLDLDTASSQLADDIYEVVLRVTVTASLGEETAFLCEVQQGGIFTVGGIEGTQLAHCLGAYCPNILFPYARECITSLVSRGTFPQLNLAPVNFDALFMNYLQQQTEGEGAAQHQDA.

Belongs to the SecB family. As to quaternary structure, homotetramer, a dimer of dimers. One homotetramer interacts with 1 SecA dimer.

The protein resides in the cytoplasm. In terms of biological role, one of the proteins required for the normal export of preproteins out of the cell cytoplasm. It is a molecular chaperone that binds to a subset of precursor proteins, maintaining them in a translocation-competent state. It also specifically binds to its receptor SecA. The sequence is that of Protein-export protein SecB from Pectobacterium carotovorum subsp. carotovorum (strain PC1).